The following is a 158-amino-acid chain: Cyclic pyranopterin monophosphate synthase (158 aa).

Residues 75–77 and 113–114 each bind substrate; these read LCH and ME. Residue Asp128 is part of the active site.

Belongs to the MoaC family. Homohexamer; trimer of dimers.

The enzyme catalyses (8S)-3',8-cyclo-7,8-dihydroguanosine 5'-triphosphate = cyclic pyranopterin phosphate + diphosphate. The protein operates within cofactor biosynthesis; molybdopterin biosynthesis. Functionally, catalyzes the conversion of (8S)-3',8-cyclo-7,8-dihydroguanosine 5'-triphosphate to cyclic pyranopterin monophosphate (cPMP). The protein is Cyclic pyranopterin monophosphate synthase of Actinobacillus pleuropneumoniae serotype 5b (strain L20).